The chain runs to 340 residues: Diacylglycerol acyltransferase/mycolyltransferase Ag85C (340 aa).

The first 45 residues, 1-45 (MTFFEQVRRLRSAATTLPRRLAIAAMGAVLVYGLVGTFGGPATAG), serve as a signal peptide directing secretion. Residue 86 to 87 (LR) coordinates substrate. A fibronectin-binding region spans residues 102-112 (FEEYYQSGLSV). Positions 170 and 198 each coordinate substrate. The Nucleophile role is filled by serine 170. Glutamate 274 is a catalytic residue. Residues 276 to 279 (LTLR) and 306 to 308 (HSW) each bind substrate. Residue histidine 306 is part of the active site.

Belongs to the mycobacterial A85 antigen family. As to quaternary structure, homodimer.

The protein resides in the secreted. The enzyme catalyses an acyl-CoA + a 1,2-diacyl-sn-glycerol = a triacyl-sn-glycerol + CoA. It carries out the reaction 2 alpha,alpha'-trehalose 6-mycolate = alpha,alpha'-trehalose 6,6'-bismycolate + alpha,alpha-trehalose. Its function is as follows. The antigen 85 proteins (FbpA, FbpB, FbpC) are responsible for the high affinity of mycobacteria to fibronectin, a large adhesive glycoprotein, which facilitates the attachment of M.tuberculosis to murine alveolar macrophages (AMs). They also help to maintain the integrity of the cell wall by catalyzing the transfer of mycolic acids to cell wall arabinogalactan and through the synthesis of alpha,alpha-trehalose dimycolate (TDM, cord factor). They catalyze the transfer of a mycoloyl residue from one molecule of alpha,alpha-trehalose monomycolate (TMM) to another TMM, leading to the formation of TDM. The protein is Diacylglycerol acyltransferase/mycolyltransferase Ag85C (fbpC) of Mycobacterium bovis (strain ATCC BAA-935 / AF2122/97).